The chain runs to 219 residues: Translation initiation factor IF-3 (219 aa).

This sequence belongs to the IF-3 family. Monomer.

Its subcellular location is the cytoplasm. Its function is as follows. IF-3 binds to the 30S ribosomal subunit and shifts the equilibrium between 70S ribosomes and their 50S and 30S subunits in favor of the free subunits, thus enhancing the availability of 30S subunits on which protein synthesis initiation begins. This chain is Translation initiation factor IF-3, found in Prochlorococcus marinus (strain MIT 9313).